Here is a 391-residue protein sequence, read N- to C-terminus: Lipid-A-disaccharide synthase (391 aa).

Belongs to the LpxB family.

It catalyses the reaction a lipid X + a UDP-2-N,3-O-bis[(3R)-3-hydroxyacyl]-alpha-D-glucosamine = a lipid A disaccharide + UDP + H(+). It functions in the pathway bacterial outer membrane biogenesis; LPS lipid A biosynthesis. Functionally, condensation of UDP-2,3-diacylglucosamine and 2,3-diacylglucosamine-1-phosphate to form lipid A disaccharide, a precursor of lipid A, a phosphorylated glycolipid that anchors the lipopolysaccharide to the outer membrane of the cell. This is Lipid-A-disaccharide synthase from Azoarcus sp. (strain BH72).